We begin with the raw amino-acid sequence, 264 residues long: tRNA (guanine-N(1)-)-methyltransferase (264 aa).

S-adenosyl-L-methionine-binding positions include Gly125 and 145–150 (LGDFVL).

Belongs to the RNA methyltransferase TrmD family. As to quaternary structure, homodimer.

It localises to the cytoplasm. It catalyses the reaction guanosine(37) in tRNA + S-adenosyl-L-methionine = N(1)-methylguanosine(37) in tRNA + S-adenosyl-L-homocysteine + H(+). In terms of biological role, specifically methylates guanosine-37 in various tRNAs. The chain is tRNA (guanine-N(1)-)-methyltransferase from Burkholderia multivorans (strain ATCC 17616 / 249).